The chain runs to 367 residues: Ataxin-7-like protein 3 (367 aa).

The segment at 84-105 (CVCPNCSRSIAASRFAPHLEKC) adopts an SGF11-type zinc-finger fold. The segment covering 116–125 (ANRRIASSNN) has biased composition (low complexity). The segment at 116 to 184 (ANRRIASSNN…GELSGSVNPD (69 aa)) is disordered. Residues 132-141 (DQEDNDDIND) are compositionally biased toward acidic residues. The region spanning 199 to 266 (LGPEELRSIL…TMLENEAYEP (68 aa)) is the SCA7 domain. Over residues 280-299 (ASSDISPSDSASSKASTNNS) the composition is skewed to low complexity. A disordered region spans residues 280 to 367 (ASSDISPSDS…PAPSIYDDLN (88 aa)). Residues 318 to 329 (GERDKAQERDRI) show a composition bias toward basic and acidic residues. Low complexity predominate over residues 330–346 (AGSGSSGSSSQNALGLS).

It belongs to the SGF11 family. In terms of assembly, component of some SAGA transcription coactivator-HAT complexes. Within the SAGA complex, participates in a subcomplex of SAGA called the DUB module (deubiquitination module).

It is found in the nucleus. Its function is as follows. Component of the transcription regulatory histone acetylation (HAT) complex SAGA, a multiprotein complex that activates transcription by remodeling chromatin and mediating histone acetylation and deubiquitination. Within the SAGA complex, participates in a subcomplex that specifically deubiquitinates histone H2B. The SAGA complex is recruited to specific gene promoters by activators, where it is required for transcription. The protein is Ataxin-7-like protein 3 (atxn7l3) of Danio rerio (Zebrafish).